The following is a 732-amino-acid chain: Prolyl tripeptidyl peptidase (732 aa).

A signal peptide spans 1–24; the sequence is MKKTIFQQLFLSVCALTVALPCSA. Catalysis depends on charge relay system residues Ser603, Asp678, and His710.

It belongs to the peptidase S9B family.

It carries out the reaction Hydrolysis of Xaa-Xaa-Pro-|-Yaa- releasing the N-terminal tripeptide of a peptide with Pro as the third residue (position P1) and where Yaa is not proline.. Serine proteinase. Releases tripeptides from the free amino terminus of proteins. Has a requirement for Pro in the P1 position, but is inactivated by Pro in the P1' position. This chain is Prolyl tripeptidyl peptidase, found in Porphyromonas gingivalis (strain ATCC 33277 / DSM 20709 / CIP 103683 / JCM 12257 / NCTC 11834 / 2561).